We begin with the raw amino-acid sequence, 412 residues long: Argininosuccinate synthase (412 aa).

Residues 16 to 24 and Ala-44 each bind ATP; that span reads AYSGGLDTS. L-citrulline-binding residues include Tyr-96 and Ser-101. Gly-126 lines the ATP pocket. L-aspartate is bound by residues Thr-128, Asn-132, and Asp-133. L-citrulline is bound at residue Asn-132. 5 residues coordinate L-citrulline: Arg-136, Ser-185, Ser-194, Glu-270, and Tyr-282.

It belongs to the argininosuccinate synthase family. Type 1 subfamily. As to quaternary structure, homotetramer.

It localises to the cytoplasm. It catalyses the reaction L-citrulline + L-aspartate + ATP = 2-(N(omega)-L-arginino)succinate + AMP + diphosphate + H(+). It participates in amino-acid biosynthesis; L-arginine biosynthesis; L-arginine from L-ornithine and carbamoyl phosphate: step 2/3. In Shewanella baltica (strain OS195), this protein is Argininosuccinate synthase.